The following is a 303-amino-acid chain: 5'-3' exonuclease (303 aa).

The 5'-3' exonuclease domain maps to 179 to 262 (ISPAQWVDVK…LATITTEIEA (84 aa)).

Functionally, 5'-3' exonuclease acting preferentially on double-stranded DNA. This is 5'-3' exonuclease from Halalkalibacterium halodurans (strain ATCC BAA-125 / DSM 18197 / FERM 7344 / JCM 9153 / C-125) (Bacillus halodurans).